A 281-amino-acid chain; its full sequence is 2-dehydro-3-deoxyphosphooctonate aldolase (281 aa).

Belongs to the KdsA family.

It localises to the cytoplasm. It carries out the reaction D-arabinose 5-phosphate + phosphoenolpyruvate + H2O = 3-deoxy-alpha-D-manno-2-octulosonate-8-phosphate + phosphate. Its pathway is carbohydrate biosynthesis; 3-deoxy-D-manno-octulosonate biosynthesis; 3-deoxy-D-manno-octulosonate from D-ribulose 5-phosphate: step 2/3. The protein operates within bacterial outer membrane biogenesis; lipopolysaccharide biosynthesis. This Pseudomonas fluorescens (strain SBW25) protein is 2-dehydro-3-deoxyphosphooctonate aldolase.